Here is a 458-residue protein sequence, read N- to C-terminus: UDP-N-acetylmuramate--L-alanine ligase (458 aa).

G112 to T118 lines the ATP pocket.

It belongs to the MurCDEF family.

The protein resides in the cytoplasm. It carries out the reaction UDP-N-acetyl-alpha-D-muramate + L-alanine + ATP = UDP-N-acetyl-alpha-D-muramoyl-L-alanine + ADP + phosphate + H(+). The protein operates within cell wall biogenesis; peptidoglycan biosynthesis. Cell wall formation. This chain is UDP-N-acetylmuramate--L-alanine ligase, found in Syntrophotalea carbinolica (strain DSM 2380 / NBRC 103641 / GraBd1) (Pelobacter carbinolicus).